Consider the following 224-residue polypeptide: Large ribosomal subunit protein uL4 (224 aa).

The interval arginine 53–alanine 74 is disordered.

This sequence belongs to the universal ribosomal protein uL4 family. Part of the 50S ribosomal subunit.

One of the primary rRNA binding proteins, this protein initially binds near the 5'-end of the 23S rRNA. It is important during the early stages of 50S assembly. It makes multiple contacts with different domains of the 23S rRNA in the assembled 50S subunit and ribosome. In terms of biological role, forms part of the polypeptide exit tunnel. In Chlamydia pneumoniae (Chlamydophila pneumoniae), this protein is Large ribosomal subunit protein uL4.